The primary structure comprises 344 residues: Phenylalanine--tRNA ligase alpha subunit (344 aa).

Glutamate 256 is a Mg(2+) binding site.

This sequence belongs to the class-II aminoacyl-tRNA synthetase family. Phe-tRNA synthetase alpha subunit type 1 subfamily. In terms of assembly, tetramer of two alpha and two beta subunits. Requires Mg(2+) as cofactor.

The protein localises to the cytoplasm. It carries out the reaction tRNA(Phe) + L-phenylalanine + ATP = L-phenylalanyl-tRNA(Phe) + AMP + diphosphate + H(+). The sequence is that of Phenylalanine--tRNA ligase alpha subunit from Onion yellows phytoplasma (strain OY-M).